The primary structure comprises 356 residues: N-methyltransferase 4 (356 aa).

Residues 93-94, 128-136, and 155-160 each bind S-adenosyl-L-methionine; these read QS, ILDIGCGFG, and TNSAEQ.

The protein belongs to the CFA/CMAS family. Expressed in stems, roots, flower buds and leaves.

Probable N-methyltransferase not involved in benzylisoquinoline metabolism. Shows no detectable activity with (s)-coclaurine, (R)- or (S)-reticuline, papaverine or (R,S)-tetrahydropapaverine. This chain is N-methyltransferase 4 (NMT4), found in Papaver somniferum (Opium poppy).